A 344-amino-acid chain; its full sequence is Fructose-1,6-bisphosphatase class 1 (344 aa).

Mg(2+) is bound by residues glutamate 92, aspartate 115, leucine 117, and aspartate 118. Substrate contacts are provided by residues 118–121 (DGSS), asparagine 211, tyrosine 244, and lysine 274. Mg(2+) is bound at residue glutamate 280.

Belongs to the FBPase class 1 family. As to quaternary structure, homotetramer. Mg(2+) is required as a cofactor.

Its subcellular location is the cytoplasm. It catalyses the reaction beta-D-fructose 1,6-bisphosphate + H2O = beta-D-fructose 6-phosphate + phosphate. It participates in carbohydrate biosynthesis; gluconeogenesis. The sequence is that of Fructose-1,6-bisphosphatase class 1 from Aeromonas salmonicida (strain A449).